Here is a 225-residue protein sequence, read N- to C-terminus: NAD(P)H-quinone oxidoreductase subunit K, chloroplastic (225 aa).

The [4Fe-4S] cluster site is built by C43, C44, C108, and C139.

Belongs to the complex I 20 kDa subunit family. In terms of assembly, NDH is composed of at least 16 different subunits, 5 of which are encoded in the nucleus. It depends on [4Fe-4S] cluster as a cofactor.

The protein localises to the plastid. The protein resides in the chloroplast thylakoid membrane. The catalysed reaction is a plastoquinone + NADH + (n+1) H(+)(in) = a plastoquinol + NAD(+) + n H(+)(out). It catalyses the reaction a plastoquinone + NADPH + (n+1) H(+)(in) = a plastoquinol + NADP(+) + n H(+)(out). Functionally, NDH shuttles electrons from NAD(P)H:plastoquinone, via FMN and iron-sulfur (Fe-S) centers, to quinones in the photosynthetic chain and possibly in a chloroplast respiratory chain. The immediate electron acceptor for the enzyme in this species is believed to be plastoquinone. Couples the redox reaction to proton translocation, and thus conserves the redox energy in a proton gradient. This is NAD(P)H-quinone oxidoreductase subunit K, chloroplastic from Nandina domestica (Heavenly bamboo).